The chain runs to 113 residues: Hydrogenase maturation factor HybF (113 aa).

Ni(2+) contacts are provided by His2 and Glu3. Cys73, Cys76, Cys89, and Cys92 together coordinate Zn(2+).

This sequence belongs to the HypA/HybF family. HybF subfamily.

Functionally, involved in the maturation of [NiFe] hydrogenases. Required for nickel insertion into the metal center of the hydrogenase. In Proteus vulgaris, this protein is Hydrogenase maturation factor HybF.